Reading from the N-terminus, the 287-residue chain is Orotidine 5'-phosphate decarboxylase (287 aa).

Lys-97 acts as the Proton donor in catalysis.

The protein belongs to the OMP decarboxylase family. Type 2 subfamily.

It catalyses the reaction orotidine 5'-phosphate + H(+) = UMP + CO2. Its pathway is pyrimidine metabolism; UMP biosynthesis via de novo pathway; UMP from orotate: step 2/2. The sequence is that of Orotidine 5'-phosphate decarboxylase (pyrF) from Clostridium perfringens (strain 13 / Type A).